We begin with the raw amino-acid sequence, 470 residues long: ATP synthase subunit beta (470 aa).

ATP is bound at residue 156–163 (GGAGVGKT).

It belongs to the ATPase alpha/beta chains family. As to quaternary structure, F-type ATPases have 2 components, CF(1) - the catalytic core - and CF(0) - the membrane proton channel. CF(1) has five subunits: alpha(3), beta(3), gamma(1), delta(1), epsilon(1). CF(0) has three main subunits: a(1), b(2) and c(9-12). The alpha and beta chains form an alternating ring which encloses part of the gamma chain. CF(1) is attached to CF(0) by a central stalk formed by the gamma and epsilon chains, while a peripheral stalk is formed by the delta and b chains.

Its subcellular location is the cell inner membrane. The enzyme catalyses ATP + H2O + 4 H(+)(in) = ADP + phosphate + 5 H(+)(out). Functionally, produces ATP from ADP in the presence of a proton gradient across the membrane. The catalytic sites are hosted primarily by the beta subunits. This chain is ATP synthase subunit beta, found in Thermosipho africanus (strain TCF52B).